The chain runs to 99 residues: uncharacterized protein (99 aa).

Disordered regions lie at residues 1 to 24 (MKAT…VRAT) and 49 to 99 (SVRT…RCAT). 2 stretches are compositionally biased toward basic residues: residues 15–24 (VRRRRRVRAT) and 71–81 (SRRRGRPRSSR).

This is an uncharacterized protein from Streptomyces fradiae (Streptomyces roseoflavus).